An 82-amino-acid polypeptide reads, in one-letter code: Toxin GTx1-15 (82 aa).

A signal peptide spans 1 to 21; the sequence is MKTSVVFVIAGLALLSVACYA. Residues 22–46 constitute a propeptide that is removed on maturation; sequence SELKEQSSINEVLSTIFHFEQPEER. Intrachain disulfides connect Cys-48–Cys-63, Cys-55–Cys-69, and Cys-62–Cys-76. Phenylalanine amide is present on Phe-80.

It belongs to the neurotoxin 10 (Hwtx-1) family. 08 (Gtx1-15) subfamily. Expressed by the venom gland.

The protein localises to the secreted. In terms of biological role, potent voltage-gated sodium channel blocker. Potently inhibits the voltage-gated sodium channels Nav1.7/SCN9A (IC(50)=0.58-10 nM). Shows a moderate activity on Nav1.1/SCN1A (IC(50)=6 nM), Nav1.2/SCN2A (IC(50)=5-128 nM), Nav1.3/SCN3A (IC(50)=20.3-170 nM), and Nav1.6/SCN8A (IC(50)=17-20.1 nM). Shows an unclear inhibition of Nav1.4/SCN4A (IC(50)=200 nM to &gt;10 uM), Nav1.5/SCN5A (IC(50)=140 nM to &gt;10 uM) and Nav1.8/SCN10A (IC(50)=68-12200 nM). Weakly blocks the low voltage-gated calcium channels Cav3.1/CACNA1G (30% inhibition of the peak current by 9.8 nM of the toxin). It shows moderate affinity for lipid bilayers. The protein is Toxin GTx1-15 of Grammostola rosea (Chilean rose tarantula).